A 149-amino-acid polypeptide reads, in one-letter code: Large ribosomal subunit protein bL9 (149 aa).

It belongs to the bacterial ribosomal protein bL9 family.

Functionally, binds to the 23S rRNA. In Salmonella agona (strain SL483), this protein is Large ribosomal subunit protein bL9.